We begin with the raw amino-acid sequence, 525 residues long: RNA-directed RNA polymerase (525 aa).

One can recognise a RdRp catalytic domain in the interval 72–272; it reads LVYADNIYIV…DKERLFCSAA (201 aa).

Interacts with VP3 in the cytoplasm. In terms of processing, may exist in multiple phosphorylated forms.

It localises to the virion. It carries out the reaction RNA(n) + a ribonucleoside 5'-triphosphate = RNA(n+1) + diphosphate. Functionally, RNA-dependent RNA polymerase which is found both free and covalently attached to the genomic RNA. May also contain guanylyl and methyl transferase activities. The sequence is that of RNA-directed RNA polymerase (VP1) from Gallus gallus (Chicken).